The primary structure comprises 130 residues: Small ribosomal subunit protein uS11 (130 aa).

It belongs to the universal ribosomal protein uS11 family. Part of the 30S ribosomal subunit. Interacts with proteins S7 and S18. Binds to IF-3.

Functionally, located on the platform of the 30S subunit, it bridges several disparate RNA helices of the 16S rRNA. Forms part of the Shine-Dalgarno cleft in the 70S ribosome. The protein is Small ribosomal subunit protein uS11 of Nautilia profundicola (strain ATCC BAA-1463 / DSM 18972 / AmH).